Consider the following 106-residue polypeptide: L-rhamnose mutarotase (106 aa).

Tyrosine 20 provides a ligand contact to substrate. Histidine 24 serves as the catalytic Proton donor. Residues tyrosine 43 and 78–79 (WW) each bind substrate.

Belongs to the rhamnose mutarotase family. In terms of assembly, homodimer.

Its subcellular location is the cytoplasm. It catalyses the reaction alpha-L-rhamnose = beta-L-rhamnose. Its pathway is carbohydrate metabolism; L-rhamnose metabolism. In terms of biological role, involved in the anomeric conversion of L-rhamnose. The polypeptide is L-rhamnose mutarotase (Verminephrobacter eiseniae (strain EF01-2)).